The primary structure comprises 161 residues: Allophycocyanin beta chain (161 aa).

Asn-71 is modified (N4-methylasparagine). (2R,3E)-phycocyanobilin is bound at residue Cys-81.

The protein belongs to the phycobiliprotein family. In terms of assembly, heterodimer of an alpha and a beta chain. Post-translationally, contains one covalently linked phycocyanobilin chromophore.

Its subcellular location is the plastid. The protein localises to the cyanelle thylakoid membrane. Its function is as follows. Light-harvesting photosynthetic bile pigment-protein from the phycobiliprotein complex. Allophycocyanin has a maximum absorption at approximately 650 nanometers. In Cyanophora paradoxa, this protein is Allophycocyanin beta chain (apcB).